The primary structure comprises 141 residues: Hemoglobin subunit alpha (141 aa).

Residues 1–141 (VLSPADKTNV…VSTVLTSKYR (141 aa)) form the Globin domain. Serine 3 carries the post-translational modification Phosphoserine. Lysine 7 is subject to N6-succinyllysine. Threonine 8 is modified (phosphothreonine). Lysine 11 bears the N6-succinyllysine mark. Lysine 16 is subject to N6-acetyllysine; alternate. N6-succinyllysine; alternate is present on lysine 16. Tyrosine 24 bears the Phosphotyrosine mark. Position 35 is a phosphoserine (serine 35). The residue at position 40 (lysine 40) is an N6-succinyllysine. Phosphoserine is present on serine 49. Histidine 58 serves as a coordination point for O2. Histidine 87 provides a ligand contact to heme b. Position 102 is a phosphoserine (serine 102). The residue at position 108 (threonine 108) is a Phosphothreonine. 2 positions are modified to phosphoserine: serine 124 and serine 131. Phosphothreonine is present on residues threonine 134 and threonine 137. Phosphoserine is present on serine 138.

It belongs to the globin family. In terms of assembly, heterotetramer of two alpha chains and two beta chains. In terms of tissue distribution, red blood cells.

Its function is as follows. Involved in oxygen transport from the lung to the various peripheral tissues. In terms of biological role, hemopressin acts as an antagonist peptide of the cannabinoid receptor CNR1. Hemopressin-binding efficiently blocks cannabinoid receptor CNR1 and subsequent signaling. The protein is Hemoglobin subunit alpha (HBA) of Loris tardigradus (Slender loris).